The sequence spans 220 residues: Pyrrolidone-carboxylate peptidase (220 aa).

Residues Glu80, Cys143, and His167 contribute to the active site.

It belongs to the peptidase C15 family. In terms of assembly, homotetramer.

The protein localises to the cytoplasm. The catalysed reaction is Release of an N-terminal pyroglutamyl group from a polypeptide, the second amino acid generally not being Pro.. In terms of biological role, removes 5-oxoproline from various penultimate amino acid residues except L-proline. The polypeptide is Pyrrolidone-carboxylate peptidase (pcp) (Thermococcus litoralis (strain ATCC 51850 / DSM 5473 / JCM 8560 / NS-C)).